A 529-amino-acid polypeptide reads, in one-letter code: BAR/IMD domain-containing adapter protein 2-like 2 (529 aa).

One can recognise an IMD domain in the interval 1–239 (MAPEMDQFYR…HSPGLLGPVL (239 aa)). Disordered regions lie at residues 221-332 (EASR…GGAR) and 399-529 (NPLN…PLIR). S231, S272, and S304 each carry phosphoserine. Positions 301 to 317 (SASSLYSSSTQRSRSNS) are enriched in low complexity. Positions 321–331 (RPGGGGGGGGA) are enriched in gly residues. Residues 329–392 (GGARRVRALV…PEAYVKPLDE (64 aa)) enclose the SH3 domain. Positions 439 to 459 (GNSTASSDYWDGQSRSRTPSH) are enriched in polar residues. The span at 473–484 (PSSRRSSMGSMG) shows a compositional bias: low complexity. Phosphoserine is present on residues S479 and S482.

It is found in the cell membrane. The protein resides in the cell junction. Its subcellular location is the cytoplasmic vesicle membrane. Phosphoinositides-binding protein that induces the formation of planar or gently curved membrane structures. Binds to phosphoinositides, including to phosphatidylinositol 4,5-bisphosphate (PtdIns(4,5)P2) headgroups. There seems to be no clear preference for a specific phosphoinositide. The polypeptide is BAR/IMD domain-containing adapter protein 2-like 2 (BAIAP2L2) (Bos taurus (Bovine)).